A 442-amino-acid chain; its full sequence is Cyclic AMP receptor-like protein B (442 aa).

Residues 1-16 are Extracellular-facing; it reads MGGDIHLCSMILGKNH. The helical transmembrane segment at 17–37 threads the bilayer; it reads LIFLYFANLFGSTLSFLATII. Over 38 to 219 the chain is Cytoplasmic; the sequence is TIVFYLVKKY…PKKIDTLIFY (182 aa). Residues 83 to 166 form a disordered region; that stretch reads YSSTPISIQN…LSSSDKNNTI (84 aa). Positions 91-103 are enriched in low complexity; sequence QNNNNKNNNLPKQ. The span at 112 to 122 shows a compositional bias: polar residues; that stretch reads INKNHNNYCNY. The span at 123–144 shows a compositional bias: low complexity; sequence STSATSSSSSSSSFSSTNSGSS. The segment covering 145–166 has biased composition (polar residues); the sequence is YEYQQPQKNQQTLSSSDKNNTI. A helical membrane pass occupies residues 220-240; the sequence is LSISDFIAVSGIIIEQLIIIF. At 241–255 the chain is on the extracellular side; it reads NKEISKSIGFCIGER. Residues 256 to 276 traverse the membrane as a helical segment; sequence VSIHFGLLATLFWSNCIAYYL. Over 277–289 the chain is Cytoplasmic; sequence LRETYELKPYNIR. The chain crosses the membrane as a helical span at residues 290 to 310; the sequence is FVYFHIVCWGMALIGVASLFF. At 311–334 the chain is on the extracellular side; sequence SKIITVSNIDQGGSWCSVSSSYQL. Residues 335–355 traverse the membrane as a helical segment; that stretch reads YFWVIPLFVSFTWNLICYCLI. The Cytoplasmic segment spans residues 356–382; sequence YRKFNKIIGIYGIQSVQIKTIIIRKLS. The chain crosses the membrane as a helical span at residues 383–403; that stretch reads FYLLAFLITWVWDVINNSIFL. Over 404-410 the chain is Extracellular; the sequence is YEGKCPP. Residues 411–431 traverse the membrane as a helical segment; it reads FALWILQEFFSSGYGFFNSLA. The Cytoplasmic portion of the chain corresponds to 432–442; sequence YAVTTRFYSRK.

Belongs to the G-protein coupled receptor 5 family.

The protein resides in the membrane. Functionally, receptor for cAMP. The sequence is that of Cyclic AMP receptor-like protein B (crlB) from Dictyostelium discoideum (Social amoeba).